Here is a 297-residue protein sequence, read N- to C-terminus: Probable endonuclease 4 (297 aa).

Positions 69, 110, 145, 179, 182, 214, 227, 229, and 259 each coordinate Zn(2+).

This sequence belongs to the AP endonuclease 2 family. Zn(2+) is required as a cofactor.

It catalyses the reaction Endonucleolytic cleavage to 5'-phosphooligonucleotide end-products.. Endonuclease IV plays a role in DNA repair. It cleaves phosphodiester bonds at apurinic or apyrimidinic (AP) sites, generating a 3'-hydroxyl group and a 5'-terminal sugar phosphate. This chain is Probable endonuclease 4, found in Bacillus velezensis (strain DSM 23117 / BGSC 10A6 / LMG 26770 / FZB42) (Bacillus amyloliquefaciens subsp. plantarum).